A 431-amino-acid chain; its full sequence is Enolase (431 aa).

A (2R)-2-phosphoglycerate-binding site is contributed by Gln166. Catalysis depends on Glu208, which acts as the Proton donor. Mg(2+)-binding residues include Asp245, Glu288, and Asp315. (2R)-2-phosphoglycerate-binding residues include Lys340, Arg369, Ser370, and Lys391. Lys340 (proton acceptor) is an active-site residue.

The protein belongs to the enolase family. The cofactor is Mg(2+).

The protein localises to the cytoplasm. The protein resides in the secreted. It is found in the cell surface. It catalyses the reaction (2R)-2-phosphoglycerate = phosphoenolpyruvate + H2O. The protein operates within carbohydrate degradation; glycolysis; pyruvate from D-glyceraldehyde 3-phosphate: step 4/5. Functionally, catalyzes the reversible conversion of 2-phosphoglycerate (2-PG) into phosphoenolpyruvate (PEP). It is essential for the degradation of carbohydrates via glycolysis. This is Enolase from Clostridium botulinum (strain ATCC 19397 / Type A).